The primary structure comprises 162 residues: NADPH-dependent 7-cyano-7-deazaguanine reductase (162 aa).

The active-site Thioimide intermediate is cysteine 53. Aspartate 60 serves as the catalytic Proton donor. Substrate is bound by residues 75 to 77 (VES) and 94 to 95 (HE).

The protein belongs to the GTP cyclohydrolase I family. QueF type 1 subfamily.

The protein localises to the cytoplasm. The enzyme catalyses 7-aminomethyl-7-carbaguanine + 2 NADP(+) = 7-cyano-7-deazaguanine + 2 NADPH + 3 H(+). Its pathway is tRNA modification; tRNA-queuosine biosynthesis. Its function is as follows. Catalyzes the NADPH-dependent reduction of 7-cyano-7-deazaguanine (preQ0) to 7-aminomethyl-7-deazaguanine (preQ1). In Exiguobacterium sp. (strain ATCC BAA-1283 / AT1b), this protein is NADPH-dependent 7-cyano-7-deazaguanine reductase.